The primary structure comprises 87 residues: Small ribosomal subunit protein bS18 (87 aa).

The segment covering 1-19 (MSTRSRARKRSRVRSRTRR) has biased composition (basic residues). The tract at residues 1–25 (MSTRSRARKRSRVRSRTRRKDPIFV) is disordered.

Belongs to the bacterial ribosomal protein bS18 family. As to quaternary structure, part of the 30S ribosomal subunit. Forms a tight heterodimer with protein bS6.

Its function is as follows. Binds as a heterodimer with protein bS6 to the central domain of the 16S rRNA, where it helps stabilize the platform of the 30S subunit. The polypeptide is Small ribosomal subunit protein bS18 (Rhodopirellula baltica (strain DSM 10527 / NCIMB 13988 / SH1)).